The chain runs to 165 residues: Crossover junction endodeoxyribonuclease RuvC (165 aa).

Residues Asp-8, Glu-69, and His-141 contribute to the active site. Mg(2+) contacts are provided by Asp-8, Glu-69, and His-141.

The protein belongs to the RuvC family. As to quaternary structure, homodimer which binds Holliday junction (HJ) DNA. The HJ becomes 2-fold symmetrical on binding to RuvC with unstacked arms; it has a different conformation from HJ DNA in complex with RuvA. In the full resolvosome a probable DNA-RuvA(4)-RuvB(12)-RuvC(2) complex forms which resolves the HJ. It depends on Mg(2+) as a cofactor.

The protein resides in the cytoplasm. It catalyses the reaction Endonucleolytic cleavage at a junction such as a reciprocal single-stranded crossover between two homologous DNA duplexes (Holliday junction).. Its function is as follows. The RuvA-RuvB-RuvC complex processes Holliday junction (HJ) DNA during genetic recombination and DNA repair. Endonuclease that resolves HJ intermediates. Cleaves cruciform DNA by making single-stranded nicks across the HJ at symmetrical positions within the homologous arms, yielding a 5'-phosphate and a 3'-hydroxyl group; requires a central core of homology in the junction. The consensus cleavage sequence is 5'-(A/T)TT(C/G)-3'. Cleavage occurs on the 3'-side of the TT dinucleotide at the point of strand exchange. HJ branch migration catalyzed by RuvA-RuvB allows RuvC to scan DNA until it finds its consensus sequence, where it cleaves and resolves the cruciform DNA. The polypeptide is Crossover junction endodeoxyribonuclease RuvC (Wolbachia pipientis subsp. Culex pipiens (strain wPip)).